A 325-amino-acid polypeptide reads, in one-letter code: Ribose-phosphate pyrophosphokinase (325 aa).

ATP-binding positions include 45–47 (NGE) and 104–105 (RQ). Mg(2+)-binding residues include H138 and D178. Residue K202 is part of the active site. Residues R204, D230, and 234-238 (DTGGT) each bind D-ribose 5-phosphate.

Belongs to the ribose-phosphate pyrophosphokinase family. Class I subfamily. Homohexamer. Mg(2+) serves as cofactor.

The protein resides in the cytoplasm. It carries out the reaction D-ribose 5-phosphate + ATP = 5-phospho-alpha-D-ribose 1-diphosphate + AMP + H(+). It participates in metabolic intermediate biosynthesis; 5-phospho-alpha-D-ribose 1-diphosphate biosynthesis; 5-phospho-alpha-D-ribose 1-diphosphate from D-ribose 5-phosphate (route I): step 1/1. Functionally, involved in the biosynthesis of the central metabolite phospho-alpha-D-ribosyl-1-pyrophosphate (PRPP) via the transfer of pyrophosphoryl group from ATP to 1-hydroxyl of ribose-5-phosphate (Rib-5-P). The chain is Ribose-phosphate pyrophosphokinase from Corynebacterium glutamicum (strain ATCC 13032 / DSM 20300 / JCM 1318 / BCRC 11384 / CCUG 27702 / LMG 3730 / NBRC 12168 / NCIMB 10025 / NRRL B-2784 / 534).